A 313-amino-acid chain; its full sequence is Malate dehydrogenase (313 aa).

NAD(+)-binding positions include glycine 11 to glycine 16 and aspartate 35. Substrate contacts are provided by arginine 84 and arginine 90. Residues asparagine 97 and valine 120–asparagine 122 each bind NAD(+). 2 residues coordinate substrate: asparagine 122 and arginine 153. Histidine 177 acts as the Proton acceptor in catalysis.

The protein belongs to the LDH/MDH superfamily. MDH type 3 family.

The enzyme catalyses (S)-malate + NAD(+) = oxaloacetate + NADH + H(+). Functionally, catalyzes the reversible oxidation of malate to oxaloacetate. The protein is Malate dehydrogenase of Ehrlichia chaffeensis (strain ATCC CRL-10679 / Arkansas).